We begin with the raw amino-acid sequence, 426 residues long: Ubiquitin carboxyl-terminal hydrolase 46 (426 aa).

Gly-2 carries the N-myristoyl glycine lipid modification. Residues Tyr-27–Arg-406 form the USP domain. Cys-36 functions as the Nucleophile in the catalytic mechanism. The tract at residues Thr-162–Thr-181 is disordered. His-342 serves as the catalytic Proton acceptor.

The protein belongs to the peptidase C19 family. Interacts with wdr-20 and wdr-48; the catalytic activity of usp-46 is increased in the presence of both wdr-20 and wdr-48. Interacts with glr-1; the interaction results in deubiquitination of glr-1. In terms of tissue distribution, expressed in a number of tissues including the nervous system, pharynx, body wall muscle, vulva muscle and intestine and is detected in many head and ventral cord neurons.

The protein localises to the perikaryon. The protein resides in the cytoplasm. The catalysed reaction is Thiol-dependent hydrolysis of ester, thioester, amide, peptide and isopeptide bonds formed by the C-terminal Gly of ubiquitin (a 76-residue protein attached to proteins as an intracellular targeting signal).. Regulates the abundance of the glr-1 glutamate receptor in the ventral nerve cord by promoting its deubiquitination and preventing its degradation in the lysosome. Contributes to the regulation of embryonic polarity. In Caenorhabditis elegans, this protein is Ubiquitin carboxyl-terminal hydrolase 46 (usp-46).